The chain runs to 262 residues: Flap endonuclease Xni (262 aa).

Asp105 serves as a coordination point for Mg(2+). One can recognise a 5'-3' exonuclease domain in the interval 162–254 (ERSQFLDLMA…LKDFRVIDSL (93 aa)). Leu172, Ala173, Pro181, Ile183, and Ile186 together coordinate K(+). An interaction with DNA region spans residues 185–190 (GIGPKS).

It belongs to the Xni family. It depends on Mg(2+) as a cofactor. K(+) serves as cofactor.

In terms of biological role, has flap endonuclease activity. During DNA replication, flap endonucleases cleave the 5'-overhanging flap structure that is generated by displacement synthesis when DNA polymerase encounters the 5'-end of a downstream Okazaki fragment. The protein is Flap endonuclease Xni of Shewanella baltica (strain OS195).